Here is a 343-residue protein sequence, read N- to C-terminus: Adenine deaminase (343 aa).

3 residues coordinate Zn(2+): His-17, His-19, and His-197. Glu-200 acts as the Proton donor in catalysis. Asp-278 contacts Zn(2+). Asp-279 contributes to the substrate binding site.

It belongs to the metallo-dependent hydrolases superfamily. Adenosine and AMP deaminases family. Adenine deaminase type 2 subfamily. The cofactor is Zn(2+).

The catalysed reaction is adenine + H2O + H(+) = hypoxanthine + NH4(+). Its function is as follows. Catalyzes the hydrolytic deamination of adenine to hypoxanthine. Plays an important role in the purine salvage pathway and in nitrogen catabolism. The protein is Adenine deaminase of Rhodopseudomonas palustris (strain BisB18).